Reading from the N-terminus, the 224-residue chain is IAP-like protein p27 (224 aa).

Residues 29–92 (VDARNQSFAI…GFWSRNCGFM (64 aa)) form a BIR repeat. Zn(2+) is bound by residues Cys62, Cys65, His82, and Cys89.

Its function is as follows. Not essential for growth or virulence. Does not have antiapoptotic function. The sequence is that of IAP-like protein p27 (p27) from Ornithodoros (relapsing fever ticks).